The following is a 382-amino-acid chain: 26S proteasome non-ATPase regulatory subunit 6 (382 aa).

One can recognise a PCI domain in the interval 186–354 (QFKEASDLYL…GVIETTRSDA (169 aa)).

Belongs to the proteasome subunit S10 family.

Its function is as follows. Acts as a regulatory subunit of the 26S proteasome which is involved in the ATP-dependent degradation of ubiquitinated proteins. This Dictyostelium discoideum (Social amoeba) protein is 26S proteasome non-ATPase regulatory subunit 6 (psmD6).